The primary structure comprises 348 residues: sn-glycerol-3-phosphate import ATP-binding protein UgpC (348 aa).

In terms of domain architecture, ABC transporter spans 4-235; it reads IQLSNIKKQY…PETTFVADFI (232 aa). ATP is bound at residue 37–44; it reads GPSGCGKS.

The protein belongs to the ABC transporter superfamily. sn-glycerol-3-phosphate importer (TC 3.A.1.1.3) family. In terms of assembly, the complex is composed of two ATP-binding proteins (UgpC), two transmembrane proteins (UgpA and UgpE) and a solute-binding protein (UgpB).

It is found in the cell inner membrane. It carries out the reaction sn-glycerol 3-phosphate(out) + ATP + H2O = sn-glycerol 3-phosphate(in) + ADP + phosphate + H(+). Functionally, part of the ABC transporter complex UgpBAEC involved in sn-glycerol-3-phosphate (G3P) import. Responsible for energy coupling to the transport system. This Bartonella quintana (strain Toulouse) (Rochalimaea quintana) protein is sn-glycerol-3-phosphate import ATP-binding protein UgpC.